The chain runs to 277 residues: Large ribosomal subunit protein uL2 (277 aa).

A disordered region spans residues V227–K277. Positions K266–K277 are enriched in basic and acidic residues.

This sequence belongs to the universal ribosomal protein uL2 family. Part of the 50S ribosomal subunit. Forms a bridge to the 30S subunit in the 70S ribosome.

Its function is as follows. One of the primary rRNA binding proteins. Required for association of the 30S and 50S subunits to form the 70S ribosome, for tRNA binding and peptide bond formation. It has been suggested to have peptidyltransferase activity; this is somewhat controversial. Makes several contacts with the 16S rRNA in the 70S ribosome. The chain is Large ribosomal subunit protein uL2 from Magnetococcus marinus (strain ATCC BAA-1437 / JCM 17883 / MC-1).